Consider the following 452-residue polypeptide: Gastrin/cholecystokinin type B receptor (452 aa).

Residues 1 to 57 are Extracellular-facing; it reads MELLKLNRSLPGPGPGAALCRPEGPLLNGSGAGNLSCEPPRIRGAGTRELELAVRIT. N-linked (GlcNAc...) asparagine glycans are attached at residues asparagine 7, asparagine 28, and asparagine 34. Residues 58-78 traverse the membrane as a helical segment; it reads LYAAIFLMSVAGNVLIIVVLG. Topologically, residues 79–99 are cytoplasmic; the sequence is LSRRLRTVTNAFLLSLAVSDL. A helical transmembrane segment spans residues 100-120; that stretch reads LLAVACMPFTLLPNLMGTFIF. Topologically, residues 121-127 are extracellular; sequence GTVVCKA. Residues cysteine 125 and cysteine 203 are joined by a disulfide bond. Residues 128 to 148 traverse the membrane as a helical segment; it reads VSYFMGVSVSVSTLSLVAIAL. Residues 149–171 lie on the Cytoplasmic side of the membrane; that stretch reads ERYSAICRPLQARVWQTRSHAAR. A helical membrane pass occupies residues 172–192; sequence VIVATWMLSGLLMVPYPVYTA. At 193–218 the chain is on the extracellular side; it reads VQPAGPRVLQCMHRWPSARIRQTWSV. The helical transmembrane segment at 219–239 threads the bilayer; that stretch reads LLLLLLFFVPGVVMAVAYGLI. The Cytoplasmic portion of the chain corresponds to 240–339; the sequence is SRELYLGLRF…LLAKKRVVRM (100 aa). The interval 256–285 is disordered; the sequence is ESQSQVGSQGGLPGGAGQGPAHPNGHCRSE. The segment covering 263-273 has biased composition (gly residues); it reads SQGGLPGGAGQ. The chain crosses the membrane as a helical span at residues 340–360; sequence LLVIVVLFFLCWLPVYSANTW. The Extracellular portion of the chain corresponds to 361–376; the sequence is RAFDGPGAHRALSGAP. The chain crosses the membrane as a helical span at residues 377 to 397; that stretch reads ISFIHLLSYASACVNPLVYCF. At 398–452 the chain is on the cytoplasmic side; it reads MHRRFRQACLDTCARCCPRPPRARPRPLPDEDPPTPSIASLSRLSYTTISTLGPG. Cysteine 413 carries S-palmitoyl cysteine lipidation.

Belongs to the G-protein coupled receptor 1 family.

The protein localises to the cell membrane. Receptor for gastrin and cholecystokinin. The CCK-B receptors occur throughout the central nervous system where they modulate anxiety, analgesia, arousal, and neuroleptic activity. This receptor mediates its action by association with G proteins that activate a phosphatidylinositol-calcium second messenger system. This chain is Gastrin/cholecystokinin type B receptor, found in Sus scrofa (Pig).